A 957-amino-acid chain; its full sequence is SH3 domain-binding protein 4 (957 aa).

Positions 54 to 113 (DNVKEVVAIKDYCPNNFTTLKFSKGEHLYVLDTSGGEWWYAHNTTEMGYIPSSYVQPLNY) constitute an SH3 1 domain. Positions 312-449 (TSIVCRLDSS…LEPVMYVVMV (138 aa)) constitute a ZU5 domain. Positions 649–719 (TSLKYGKLLK…HAKNVLVVGK (71 aa)) constitute an SH3 2 domain.

As to quaternary structure, homodimer or homooligomer.

The protein resides in the membrane. It is found in the clathrin-coated pit. The protein localises to the cytoplasmic vesicle. It localises to the clathrin-coated vesicle. Its subcellular location is the nucleus. Possible role in regulating endocytosis of the transferrin receptor at the plasma membrane. Alternatively, may function as a negative regulator of the amino acid-induced TOR signaling by inhibiting the formation of active Rag GTPase complexes. Preferentially binds inactive Rag GTPase complexes and prevents their interaction with the mTORC1 complex inhibiting its relocalization to lysosomes and its activation. Thereby, may indirectly regulate cell growth, proliferation and autophagy. In Xenopus tropicalis (Western clawed frog), this protein is SH3 domain-binding protein 4 (sh3bp4).